The chain runs to 248 residues: Octanoyltransferase (248 aa).

One can recognise a BPL/LPL catalytic domain in the interval 53–238 (ADTGDEIWVV…NLDGASAAAD (186 aa)). Substrate is bound by residues 93–100 (RGGQITYH), 165–167 (ALG), and 178–180 (GLS). Cys196 functions as the Acyl-thioester intermediate in the catalytic mechanism.

Belongs to the LipB family.

It localises to the cytoplasm. It carries out the reaction octanoyl-[ACP] + L-lysyl-[protein] = N(6)-octanoyl-L-lysyl-[protein] + holo-[ACP] + H(+). The protein operates within protein modification; protein lipoylation via endogenous pathway; protein N(6)-(lipoyl)lysine from octanoyl-[acyl-carrier-protein]: step 1/2. Its function is as follows. Catalyzes the transfer of endogenously produced octanoic acid from octanoyl-acyl-carrier-protein onto the lipoyl domains of lipoate-dependent enzymes. Lipoyl-ACP can also act as a substrate although octanoyl-ACP is likely to be the physiological substrate. The protein is Octanoyltransferase of Burkholderia orbicola (strain MC0-3).